The following is a 340-amino-acid chain: Chitinase 7 (340 aa).

The signal sequence occupies residues 1–32; sequence MIAARAANLQVAMKALALAVLALAYAAATARA. The 41-residue stretch at 33 to 73 folds into the Chitin-binding type-1 domain; sequence EQCGRQAGGARCPNRLCCSRWGWCGLTDDYCKGGCQSQCRV. Intrachain disulfides connect cysteine 35–cysteine 50, cysteine 44–cysteine 56, cysteine 49–cysteine 63, cysteine 67–cysteine 71, cysteine 118–cysteine 173, cysteine 185–cysteine 193, and cysteine 293–cysteine 323.

This sequence belongs to the glycosyl hydrolase 19 family. Chitinase class I subfamily. Expressed in pistils, stamens and lodicules.

The catalysed reaction is Random endo-hydrolysis of N-acetyl-beta-D-glucosaminide (1-&gt;4)-beta-linkages in chitin and chitodextrins.. Hydrolyzes chitin and may play a role in defense against fungal pathogens containing chitin. This is Chitinase 7 (Cht7) from Oryza sativa subsp. japonica (Rice).